The chain runs to 277 residues: Probable enoyl-CoA hydratase, mitochondrial (277 aa).

The transit peptide at 1–42 directs the protein to the mitochondrion; the sequence is MLKQVIKTVSSSQAPKKYFFKQFCTSTTEKKGRVGLVTLNRP. Residues 85–88 and G128 contribute to the substrate site; that span reads ADIK.

The protein belongs to the enoyl-CoA hydratase/isomerase family. As to quaternary structure, homohexamer; dimer of trimers.

Its subcellular location is the mitochondrion matrix. It catalyses the reaction a (3S)-3-hydroxyacyl-CoA = a (2E)-enoyl-CoA + H2O. The enzyme catalyses a 4-saturated-(3S)-3-hydroxyacyl-CoA = a (3E)-enoyl-CoA + H2O. It carries out the reaction (3S)-3-hydroxybutanoyl-CoA = (2E)-butenoyl-CoA + H2O. The catalysed reaction is 3-hydroxyisovaleryl-CoA = 3-methylbut-2-enoyl-CoA + H2O. It catalyses the reaction 3-hydroxypropanoyl-CoA = acryloyl-CoA + H2O. The enzyme catalyses 3-hydroxybutanoyl-CoA = (2E)-butenoyl-CoA + H2O. It participates in lipid metabolism; fatty acid beta-oxidation. In terms of biological role, straight-chain enoyl-CoA thioesters from C4 up to at least C16 are processed, although with decreasing catalytic rate. The protein is Probable enoyl-CoA hydratase, mitochondrial (echs1) of Dictyostelium discoideum (Social amoeba).